Consider the following 313-residue polypeptide: tRNA dimethylallyltransferase (313 aa).

9-16 (GPTATGKS) contacts ATP. 11–16 (TATGKS) contributes to the substrate binding site.

It belongs to the IPP transferase family. As to quaternary structure, monomer. Mg(2+) is required as a cofactor.

The enzyme catalyses adenosine(37) in tRNA + dimethylallyl diphosphate = N(6)-dimethylallyladenosine(37) in tRNA + diphosphate. Catalyzes the transfer of a dimethylallyl group onto the adenine at position 37 in tRNAs that read codons beginning with uridine, leading to the formation of N6-(dimethylallyl)adenosine (i(6)A). This is tRNA dimethylallyltransferase from Mycobacteroides abscessus (strain ATCC 19977 / DSM 44196 / CCUG 20993 / CIP 104536 / JCM 13569 / NCTC 13031 / TMC 1543 / L948) (Mycobacterium abscessus).